The primary structure comprises 295 residues: Transcription factor MYB34 (295 aa).

HTH myb-type domains are found at residues 9-61 and 62-116; these read EEGI…ANYL and RPDI…KKRL. DNA-binding regions (H-T-H motif) lie at residues 37–61 and 89–112; these read WRTL…ANYL and WAAI…NTNL.

As to quaternary structure, can form complexes with MYC2, MYC3 or MYC4. Expressed in trichomes.

The protein localises to the nucleus. Its function is as follows. Transcription factor involved in tryptophan gene activation and in indole-3-acetic acid (IAA) and indolic glucosinolates (IG) biosynthesis. Acts as a direct transcriptional activator of both Trp synthesis genes and Trp secondary metabolism genes. The protein is Transcription factor MYB34 (MYB34) of Arabidopsis thaliana (Mouse-ear cress).